The chain runs to 171 residues: uncharacterized protein (171 aa).

The disordered stretch occupies residues 56-83; that stretch reads TVGVNKNAKNGPTQSQTRSGSAGAQARM. Residues 57–77 show a composition bias toward polar residues; it reads VGVNKNAKNGPTQSQTRSGSA. One can recognise a J domain in the interval 113–170; sequence KAFETLGLGASATTADIKAAYKDLVKKHHPDANGGDRGSEERFRAVIQAYQLLKQAGF.

This is an uncharacterized protein from Sinorhizobium sp.